A 556-amino-acid chain; its full sequence is Aplysianin-A (556 aa).

Residues 1–19 form the signal peptide; it reads MAVRFLALGLLIFVTSCSG. 6 N-linked (GlcNAc...) asparagine glycosylation sites follow: Asn-150, Asn-177, Asn-374, Asn-399, Asn-414, and Asn-430.

This sequence to A.fulica achacin protein. As to quaternary structure, homotetramer. In terms of tissue distribution, albumen gland.

In terms of biological role, has antibacterial activity against Gram-negative and Gram-positive bacteria. The polypeptide is Aplysianin-A (Aplysia kurodai (Kuroda's sea hare)).